Here is a 100-residue protein sequence, read N- to C-terminus: NAD(P)H-quinone oxidoreductase subunit 4L, chloroplastic (100 aa).

The next 3 membrane-spanning stretches (helical) occupy residues methionine 1 to isoleucine 21, alanine 29 to asparagine 49, and isoleucine 60 to valine 80.

The protein belongs to the complex I subunit 4L family. NDH is composed of at least 16 different subunits, 5 of which are encoded in the nucleus.

The protein localises to the plastid. Its subcellular location is the chloroplast thylakoid membrane. The enzyme catalyses a plastoquinone + NADH + (n+1) H(+)(in) = a plastoquinol + NAD(+) + n H(+)(out). The catalysed reaction is a plastoquinone + NADPH + (n+1) H(+)(in) = a plastoquinol + NADP(+) + n H(+)(out). In terms of biological role, NDH shuttles electrons from NAD(P)H:plastoquinone, via FMN and iron-sulfur (Fe-S) centers, to quinones in the photosynthetic chain and possibly in a chloroplast respiratory chain. The immediate electron acceptor for the enzyme in this species is believed to be plastoquinone. Couples the redox reaction to proton translocation, and thus conserves the redox energy in a proton gradient. In Physcomitrium patens (Spreading-leaved earth moss), this protein is NAD(P)H-quinone oxidoreductase subunit 4L, chloroplastic.